A 308-amino-acid chain; its full sequence is Glutaminase (308 aa).

7 residues coordinate substrate: serine 66, asparagine 117, glutamate 161, asparagine 168, tyrosine 192, tyrosine 244, and valine 262.

It belongs to the glutaminase family. Homotetramer.

The enzyme catalyses L-glutamine + H2O = L-glutamate + NH4(+). The polypeptide is Glutaminase (Klebsiella pneumoniae (strain 342)).